We begin with the raw amino-acid sequence, 548 residues long: 4-methyl-5-nitrocatechol 5-monooxygenase (548 aa).

It belongs to the PheA/TfdB FAD monooxygenase family. As to quaternary structure, monomer. Requires FAD as cofactor.

It carries out the reaction 4-methyl-5-nitrocatechol + NADPH + O2 = 2-hydroxy-5-methylquinone + nitrite + NADP(+) + H2O + H(+). The enzyme catalyses 4-methyl-5-nitrocatechol + NADH + O2 = 2-hydroxy-5-methylquinone + nitrite + NAD(+) + H2O + H(+). With respect to regulation, activated by magnesium or manganese ions. Inhibited by concentrations of 4-methyl-5-nitrocatechol (MNC) above 2 mM. In terms of biological role, involved in the degradation of 2,4-dinitrotoluene (2,4-DNT). Catalyzes the removal of the nitro group from 4-methyl-5-nitrocatechol (MNC) to yield 2-hydroxy-5-methylquinone. It can use both NADH and NADPH as electron donors, but prefers NADPH. Also able to use 4-nitrocatechol as substrate. The polypeptide is 4-methyl-5-nitrocatechol 5-monooxygenase (Burkholderia sp).